The primary structure comprises 609 residues: Phosphoenolpyruvate carboxykinase [GTP] (609 aa).

Residues Arg81 and 220–222 (YGG) each bind substrate. The Mn(2+) site is built by Lys229 and His249. Ser271 is a binding site for substrate. 272-277 (ACGKTN) serves as a coordination point for GTP. Cys273 is a catalytic residue. Asp296 contacts Mn(2+). 387–389 (NSR) is a binding site for substrate. Residues Arg389, Arg420, and 515-518 (FGEN) contribute to the GTP site.

This sequence belongs to the phosphoenolpyruvate carboxykinase [GTP] family. Monomer. Requires Mn(2+) as cofactor.

The protein resides in the cytoplasm. It catalyses the reaction oxaloacetate + GTP = phosphoenolpyruvate + GDP + CO2. It functions in the pathway carbohydrate biosynthesis; gluconeogenesis. Catalyzes the conversion of oxaloacetate (OAA) to phosphoenolpyruvate (PEP), the rate-limiting step in the metabolic pathway that produces glucose from lactate and other precursors derived from the citric acid cycle. The polypeptide is Phosphoenolpyruvate carboxykinase [GTP] (Mycolicibacterium paratuberculosis (strain ATCC BAA-968 / K-10) (Mycobacterium paratuberculosis)).